A 248-amino-acid chain; its full sequence is Cytochrome c oxidase subunit 2 (248 aa).

Residues 1–39 (MMKELLMNNMLNDVPTPWAMYFQDSATPNMEGIMELHNN) lie on the Mitochondrial intermembrane side of the membrane. A helical transmembrane segment spans residues 40 to 56 (VVFYLIIMLCFVTYMLY). Topologically, residues 57–87 (NISTVYNKSAVAYKYMNHGQFIEMVWTTFPA) are mitochondrial matrix. The chain crosses the membrane as a helical span at residues 88–104 (VMLLIMAFPSFMLLYIC). At 105–248 (DEVMAPAMTI…ADFLTWIDEQ (144 aa)) the chain is on the mitochondrial intermembrane side. H183, C218, E220, C222, H226, and M229 together coordinate Cu cation. Residue E220 coordinates Mg(2+).

It belongs to the cytochrome c oxidase subunit 2 family. As to quaternary structure, component of the cytochrome c oxidase (complex IV, CIV), a multisubunit enzyme composed of a catalytic core of 3 subunits and several supernumerary subunits. The complex exists as a monomer or a dimer and forms supercomplexes (SCs) in the inner mitochondrial membrane with ubiquinol-cytochrome c oxidoreductase (cytochrome b-c1 complex, complex III, CIII). Cu cation is required as a cofactor.

The protein localises to the mitochondrion inner membrane. It carries out the reaction 4 Fe(II)-[cytochrome c] + O2 + 8 H(+)(in) = 4 Fe(III)-[cytochrome c] + 2 H2O + 4 H(+)(out). Its function is as follows. Component of the cytochrome c oxidase, the last enzyme in the mitochondrial electron transport chain which drives oxidative phosphorylation. The respiratory chain contains 3 multisubunit complexes succinate dehydrogenase (complex II, CII), ubiquinol-cytochrome c oxidoreductase (cytochrome b-c1 complex, complex III, CIII) and cytochrome c oxidase (complex IV, CIV), that cooperate to transfer electrons derived from NADH and succinate to molecular oxygen, creating an electrochemical gradient over the inner membrane that drives transmembrane transport and the ATP synthase. Cytochrome c oxidase is the component of the respiratory chain that catalyzes the reduction of oxygen to water. Electrons originating from reduced cytochrome c in the intermembrane space (IMS) are transferred via the dinuclear copper A center (CU(A)) of subunit 2 and heme A of subunit 1 to the active site in subunit 1, a binuclear center (BNC) formed by heme A3 and copper B (CU(B)). The BNC reduces molecular oxygen to 2 water molecules using 4 electrons from cytochrome c in the IMS and 4 protons from the mitochondrial matrix. The polypeptide is Cytochrome c oxidase subunit 2 (COX2) (Brettanomyces naardenensis (Yeast)).